Consider the following 166-residue polypeptide: Transcription antitermination protein NusB (166 aa).

The segment covering 1–15 (MISDDSDRFNPRDPK) has biased composition (basic and acidic residues). The tract at residues 1-30 (MISDDSDRFNPRDPKPANAGKPSKSAKRRE) is disordered.

It belongs to the NusB family.

Its function is as follows. Involved in transcription antitermination. Required for transcription of ribosomal RNA (rRNA) genes. Binds specifically to the boxA antiterminator sequence of the ribosomal RNA (rrn) operons. The sequence is that of Transcription antitermination protein NusB from Pseudomonas fluorescens (strain ATCC BAA-477 / NRRL B-23932 / Pf-5).